Consider the following 191-residue polypeptide: Large ribosomal subunit protein bL9 (191 aa).

The tract at residues 150 to 191 (EAERQAKGESLTSADAIYGVDEDALRPEDFFDPDADRDGDDE) is disordered. Over residues 179-191 (FFDPDADRDGDDE) the composition is skewed to acidic residues.

This sequence belongs to the bacterial ribosomal protein bL9 family.

Functionally, binds to the 23S rRNA. In Allorhizobium ampelinum (strain ATCC BAA-846 / DSM 112012 / S4) (Agrobacterium vitis (strain S4)), this protein is Large ribosomal subunit protein bL9.